The following is a 136-amino-acid chain: MQASAAFPKAARLLKTDEFSSVFRLRPWRRTAHFVIYGKPTGRDARLGLVIGKKYAARAVTRNLVKRLAREAFRTRRAEFAGWDILLRLHARFDKKAMPSAASAPLAALCAGEIRELLDRAAREVARRNGAKPASE.

The protein belongs to the RnpA family. As to quaternary structure, consists of a catalytic RNA component (M1 or rnpB) and a protein subunit.

The catalysed reaction is Endonucleolytic cleavage of RNA, removing 5'-extranucleotides from tRNA precursor.. RNaseP catalyzes the removal of the 5'-leader sequence from pre-tRNA to produce the mature 5'-terminus. It can also cleave other RNA substrates such as 4.5S RNA. The protein component plays an auxiliary but essential role in vivo by binding to the 5'-leader sequence and broadening the substrate specificity of the ribozyme. The protein is Ribonuclease P protein component of Burkholderia pseudomallei (strain 1106a).